The following is a 651-amino-acid chain: Protein EXECUTER 2, chloroplastic (651 aa).

Residues 1–69 (MATTQPCLIG…KAPSLSCLRN (69 aa)) constitute a chloroplast transit peptide. The 36-residue stretch at 103-138 (ESVVSLLKSQLEDAVEKEDFEEAVKLKQAISEATVD) folds into the UVR domain. Residues 330–359 (DATEELVGEGTEETNSSDDEEEVEEEENDS) form a disordered region.

Its subcellular location is the plastid. It is found in the chloroplast. Together with EX1, enables higher plants to perceive singlet oxygen as a stress signal in plastid that activates a genetically determined nuclear stress response program which triggers a programmed cell death (PCD). This transfer of singlet oxygen-induced stress-related signals from the plastid to the nucleus that triggers genetically controlled PCD pathway is unique to photosynthetic eukaryotes and operates under mild stress conditions, impeding photosystem II (PSII) without causing photooxidative damage of the plant. This is Protein EXECUTER 2, chloroplastic from Arabidopsis thaliana (Mouse-ear cress).